An 82-amino-acid polypeptide reads, in one-letter code: MAHKKGQGASRNGRDSESKRLGMKVGAGQRVSTGSILVRQRGTKWHPSQNVGRGRDDTLFALVDGIVVTKKTDRTYISVLPE.

The interval 1–54 is disordered; sequence MAHKKGQGASRNGRDSESKRLGMKVGAGQRVSTGSILVRQRGTKWHPSQNVGRG.

The protein belongs to the bacterial ribosomal protein bL27 family.

This is Large ribosomal subunit protein bL27 from Chlamydia caviae (strain ATCC VR-813 / DSM 19441 / 03DC25 / GPIC) (Chlamydophila caviae).